A 555-amino-acid chain; its full sequence is Sulfite reductase [ferredoxin] 1 (555 aa).

A cross-link (3'-(S-cysteinyl)-tyrosine (Tyr-Cys)) is located at residues 69–161 (YTQREQGYDG…SVGLQTTEAC (93 aa)). [4Fe-4S] cluster is bound by residues Cys-417, Cys-423, Cys-463, and Cys-467. Residue Cys-467 coordinates siroheme.

Belongs to the nitrite and sulfite reductase 4Fe-4S domain family. As to quaternary structure, monomer. Siroheme is required as a cofactor. Requires [4Fe-4S] cluster as cofactor.

The catalysed reaction is hydrogen sulfide + 6 oxidized [2Fe-2S]-[ferredoxin] + 3 H2O = sulfite + 6 reduced [2Fe-2S]-[ferredoxin] + 7 H(+). In terms of biological role, catalyzes the reduction of sulfite to sulfide, a step in the biosynthesis of sulfur-containing amino acids and cofactors. In Mycolicibacterium paratuberculosis (strain ATCC BAA-968 / K-10) (Mycobacterium paratuberculosis), this protein is Sulfite reductase [ferredoxin] 1 (sir1).